The primary structure comprises 419 residues: Tyrosine--tRNA ligase (419 aa).

Y34 provides a ligand contact to L-tyrosine. The short motif at 39–48 is the 'HIGH' region element; sequence PSGDSMHIGH. Residues Y168 and Q172 each contribute to the L-tyrosine site. A 'KMSKS' region motif is present at residues 230-234; the sequence is KFGKS. K233 is a binding site for ATP. Positions 352 to 418 constitute an S4 RNA-binding domain; that stretch reads VNLVDWLVTL…GKKKYFLVSY (67 aa).

This sequence belongs to the class-I aminoacyl-tRNA synthetase family. TyrS type 1 subfamily. Homodimer.

It localises to the cytoplasm. It catalyses the reaction tRNA(Tyr) + L-tyrosine + ATP = L-tyrosyl-tRNA(Tyr) + AMP + diphosphate + H(+). Its function is as follows. Catalyzes the attachment of tyrosine to tRNA(Tyr) in a two-step reaction: tyrosine is first activated by ATP to form Tyr-AMP and then transferred to the acceptor end of tRNA(Tyr). This Listeria innocua serovar 6a (strain ATCC BAA-680 / CLIP 11262) protein is Tyrosine--tRNA ligase.